We begin with the raw amino-acid sequence, 352 residues long: DNA integrity scanning protein DisA (352 aa).

The DAC domain maps to 3-143; it reads PQELIEKIKL…NYKYVVNQVD (141 aa). ATP is bound by residues Gly71, Leu89, and 102 to 106; that span reads TRHRT.

Belongs to the DisA family. In terms of assembly, homooctamer. The cofactor is Mg(2+).

It carries out the reaction 2 ATP = 3',3'-c-di-AMP + 2 diphosphate. Its function is as follows. Participates in a DNA-damage check-point. DisA forms globular foci that rapidly scan along the chromosomes searching for lesions. Also has diadenylate cyclase activity, catalyzing the condensation of 2 ATP molecules into cyclic di-AMP (c-di-AMP). c-di-AMP likely acts as a signaling molecule that may couple DNA integrity with a cellular process. The sequence is that of DNA integrity scanning protein DisA from Thermotoga neapolitana (strain ATCC 49049 / DSM 4359 / NBRC 107923 / NS-E).